We begin with the raw amino-acid sequence, 108 residues long: UPF0235 protein RB8260 (108 aa).

The protein belongs to the UPF0235 family.

This Rhodopirellula baltica (strain DSM 10527 / NCIMB 13988 / SH1) protein is UPF0235 protein RB8260.